The chain runs to 170 residues: Translationally-controlled tumor protein homolog (170 aa).

Positions 1-170 (MIIYKDLLSG…FKDGLEIEKC (170 aa)) constitute a TCTP domain.

This sequence belongs to the TCTP family.

The protein localises to the cytoplasm. In terms of biological role, involved in calcium binding and microtubule stabilization. The sequence is that of Translationally-controlled tumor protein homolog (tpt1) from Scophthalmus maximus (Turbot).